We begin with the raw amino-acid sequence, 291 residues long: Beta-lactamase CTX-M-15 (291 aa).

The first 28 residues, 1–28 (MVKKSLRQFTLMATATVTLLLGSVPLYA), serve as a signal peptide directing secretion. Ser73 serves as the catalytic Nucleophile; acyl-ester intermediate. Residues Lys76, Ser133, Glu169, and Ser240 each contribute to the a beta-lactam site.

This sequence belongs to the class-A beta-lactamase family. As to quaternary structure, monomer.

It localises to the secreted. The enzyme catalyses a beta-lactam + H2O = a substituted beta-amino acid. With respect to regulation, inhibited by the beta-lactamase-blocking agents clavulanic acid and avibactam, via a covalent binding to Ser-73. Its function is as follows. Extended-spectrum beta-lactamase (ESBL) which confers resistance to penicillins, as well as first, second, third and fourth-generation cephalosporins. Has cefotaxime- and ceftazidime-hydrolyzing activity. Inactive against the carbapenem antibiotics, imipenem, meropenem and ertapenem. The polypeptide is Beta-lactamase CTX-M-15 (Escherichia coli O25b:H4).